Reading from the N-terminus, the 243-residue chain is Urease accessory protein UreF 2 (243 aa).

It belongs to the UreF family. UreD, UreF and UreG form a complex that acts as a GTP-hydrolysis-dependent molecular chaperone, activating the urease apoprotein by helping to assemble the nickel containing metallocenter of UreC. The UreE protein probably delivers the nickel.

It localises to the cytoplasm. Functionally, required for maturation of urease via the functional incorporation of the urease nickel metallocenter. In Brucella suis (strain ATCC 23445 / NCTC 10510), this protein is Urease accessory protein UreF 2.